The following is a 342-amino-acid chain: Biotin synthase (342 aa).

Residues 55–274 (NAVQCNQLLN…IALARIMMPK (220 aa)) enclose the Radical SAM core domain. [4Fe-4S] cluster is bound by residues C70, C74, and C77. C114, C145, C205, and R278 together coordinate [2Fe-2S] cluster.

The protein belongs to the radical SAM superfamily. Biotin synthase family. In terms of assembly, homodimer. Requires [4Fe-4S] cluster as cofactor. The cofactor is [2Fe-2S] cluster.

The catalysed reaction is (4R,5S)-dethiobiotin + (sulfur carrier)-SH + 2 reduced [2Fe-2S]-[ferredoxin] + 2 S-adenosyl-L-methionine = (sulfur carrier)-H + biotin + 2 5'-deoxyadenosine + 2 L-methionine + 2 oxidized [2Fe-2S]-[ferredoxin]. It functions in the pathway cofactor biosynthesis; biotin biosynthesis; biotin from 7,8-diaminononanoate: step 2/2. In terms of biological role, catalyzes the conversion of dethiobiotin (DTB) to biotin by the insertion of a sulfur atom into dethiobiotin via a radical-based mechanism. The polypeptide is Biotin synthase (Rhodopseudomonas palustris (strain BisB5)).